An 809-amino-acid chain; its full sequence is Pentatricopeptide repeat-containing protein At1g11290, chloroplastic (809 aa).

A chloroplast-targeting transit peptide spans 1-46 (MSSQLVQFSTVPQIPNPPSRHRHFLSERNYIPANVYEHPAALLLER). PPR repeat units lie at residues 68-98 (EHFFQTKLVSLFCRYGSVDEAARVFEPIDSK), 99-133 (LNVLYHTMLKGFAKVSDLDKALQFFVRMRYDDVEP), 134-168 (VVYNFTYLLKVCGDEAELRVGKEIHGLLVKSGFSL), 169-199 (DLFAMTGLENMYAKCRQVNEARKVFDRMPER), 200-234 (DLVSWNTIVAGYSQNGMARMALEMVKSMCEENLKP), 235-269 (SFITIVSVLPAVSALRLISVGKEIHGYAMRSGFDS), 270-300 (LVNISTALVDMYAKCGSLETARQLFDGMLER), 301-335 (NVVSWNSMIDAYVQNENPKEAMLIFQKMLDEGVKP), 336-370 (TDVSVMGALHACADLGDLERGRFIHKLSVELGLDR), 371-401 (NVSVVNSLISMYCKCKEVDTAASMFGKLQSR), 402-436 (TLVSWNAMILGFAQNGRPIDALNYFSQMRSRTVKP), 437-471 (DTFTYVSVITAIAELSITHHAKWIHGVVMRSCLDK), 472-502 (NVFVTTALVDMYAKCGAIMIARLIFDMMSER), 503-537 (HVTTWNAMIDGYGTHGFGKAALELFEEMQKGTIKP), 538-568 (NGVTFLSVISACSHSGLVEAGLKCFYMMKEN), and 574-604 (SMDHYGAMVDLLGRAGRLNEAWDFIMQMPVK). The interval 609–684 (VYGAMLGACQ…TPGCSMVEIK (76 aa)) is type E motif. A type E(+) motif region spans residues 685–715 (NEVHSFFSGSTAHPDSKKIYAFLEKLICHIK). Residues 716–809 (EAGYVPDTNL…NGACSCGDYW (94 aa)) form a type DYW motif region.

Belongs to the PPR family. PCMP-H subfamily.

Its subcellular location is the plastid. The protein localises to the chloroplast. Involved in multiple sites RNA editing events in chloroplasts. Involved in the editing of the site 7 of ndhB (ndhB-7) and site 5 of ndhD (ndhD-5) transcripts, which are two plastid-encoded subunits of the chloroplast NAD(P)H dehydrogenase (NDH) complex. Involved in the editing of the site 3 of rpoB (rpoB-3) transcript. Required for the activity of the NDH complex of the photosynthetic electron transport chain. Possesses low endoribonuclease activity in vitro. The chain is Pentatricopeptide repeat-containing protein At1g11290, chloroplastic (PCMP-H40) from Arabidopsis thaliana (Mouse-ear cress).